A 670-amino-acid polypeptide reads, in one-letter code: Transketolase (670 aa).

Position 31 (His31) interacts with substrate. Residues His71 and 120 to 122 (GPL) contribute to the thiamine diphosphate site. Asp161 contributes to the Mg(2+) binding site. Thiamine diphosphate is bound by residues Gly162 and Asn191. The Mg(2+) site is built by Asn191 and Ile193. Residues His268, Arg362, and Ser389 each contribute to the substrate site. His268 is a thiamine diphosphate binding site. The Proton donor role is filled by Glu416. Phe443 contacts thiamine diphosphate. Residues His467, Asp475, and Arg528 each coordinate substrate.

In terms of assembly, homodimer. Requires Mg(2+) as cofactor. The cofactor is Ca(2+). Mn(2+) is required as a cofactor. Co(2+) serves as cofactor. It depends on thiamine diphosphate as a cofactor.

It catalyses the reaction D-sedoheptulose 7-phosphate + D-glyceraldehyde 3-phosphate = aldehydo-D-ribose 5-phosphate + D-xylulose 5-phosphate. In terms of biological role, catalyzes the transfer of a two-carbon ketol group from a ketose donor to an aldose acceptor, via a covalent intermediate with the cofactor thiamine pyrophosphate. The polypeptide is Transketolase (tkt) (Nostoc sp. (strain PCC 7120 / SAG 25.82 / UTEX 2576)).